A 142-amino-acid chain; its full sequence is Large ribosomal subunit protein uL13 (142 aa).

Belongs to the universal ribosomal protein uL13 family. In terms of assembly, part of the 50S ribosomal subunit.

Functionally, this protein is one of the early assembly proteins of the 50S ribosomal subunit, although it is not seen to bind rRNA by itself. It is important during the early stages of 50S assembly. The chain is Large ribosomal subunit protein uL13 from Thermococcus kodakarensis (strain ATCC BAA-918 / JCM 12380 / KOD1) (Pyrococcus kodakaraensis (strain KOD1)).